The primary structure comprises 525 residues: Glucans biosynthesis protein G (525 aa).

Residues 1–35 (MIFRSVSNTDFRARVRTLLLAGSTALAFVAAPVWA) form the signal peptide.

Belongs to the OpgD/OpgG family.

The protein resides in the periplasm. It functions in the pathway glycan metabolism; osmoregulated periplasmic glucan (OPG) biosynthesis. Involved in the biosynthesis of osmoregulated periplasmic glucans (OPGs). This is Glucans biosynthesis protein G from Pseudomonas paraeruginosa (strain DSM 24068 / PA7) (Pseudomonas aeruginosa (strain PA7)).